Reading from the N-terminus, the 188-residue chain is Elongation factor P (188 aa).

Residue K34 is modified to N6-(3,6-diaminohexanoyl)-5-hydroxylysine.

This sequence belongs to the elongation factor P family. May be beta-lysylated on the epsilon-amino group of Lys-34 by the combined action of EpmA and EpmB, and then hydroxylated on the C5 position of the same residue by EpmC (if this protein is present). Lysylation is critical for the stimulatory effect of EF-P on peptide-bond formation. The lysylation moiety may extend toward the peptidyltransferase center and stabilize the terminal 3-CCA end of the tRNA. Hydroxylation of the C5 position on Lys-34 may allow additional potential stabilizing hydrogen-bond interactions with the P-tRNA.

The protein resides in the cytoplasm. Its pathway is protein biosynthesis; polypeptide chain elongation. Functionally, involved in peptide bond synthesis. Alleviates ribosome stalling that occurs when 3 or more consecutive Pro residues or the sequence PPG is present in a protein, possibly by augmenting the peptidyl transferase activity of the ribosome. Modification of Lys-34 is required for alleviation. The protein is Elongation factor P of Klebsiella pneumoniae (strain 342).